We begin with the raw amino-acid sequence, 336 residues long: Holliday junction branch migration complex subunit RuvB (336 aa).

A large ATPase domain (RuvB-L) region spans residues 2 to 186 (QDQEEERMIT…FGVICKLELY (185 aa)). ATP contacts are provided by residues Leu-25, Arg-26, Gly-67, Lys-70, Thr-71, Thr-72, 133 to 135 (EDF), Arg-176, Tyr-186, and Arg-223. Residue Thr-71 coordinates Mg(2+). The interval 187 to 257 (NNKQLTAIVK…VAEEALILLE (71 aa)) is small ATPAse domain (RuvB-S). The segment at 260 to 336 (SLGLDNTDKK…YEHFNIPSAE (77 aa)) is head domain (RuvB-H). DNA contacts are provided by Arg-296, Arg-315, and Arg-320.

It belongs to the RuvB family. Homohexamer. Forms an RuvA(8)-RuvB(12)-Holliday junction (HJ) complex. HJ DNA is sandwiched between 2 RuvA tetramers; dsDNA enters through RuvA and exits via RuvB. An RuvB hexamer assembles on each DNA strand where it exits the tetramer. Each RuvB hexamer is contacted by two RuvA subunits (via domain III) on 2 adjacent RuvB subunits; this complex drives branch migration. In the full resolvosome a probable DNA-RuvA(4)-RuvB(12)-RuvC(2) complex forms which resolves the HJ.

Its subcellular location is the cytoplasm. The catalysed reaction is ATP + H2O = ADP + phosphate + H(+). Functionally, the RuvA-RuvB-RuvC complex processes Holliday junction (HJ) DNA during genetic recombination and DNA repair, while the RuvA-RuvB complex plays an important role in the rescue of blocked DNA replication forks via replication fork reversal (RFR). RuvA specifically binds to HJ cruciform DNA, conferring on it an open structure. The RuvB hexamer acts as an ATP-dependent pump, pulling dsDNA into and through the RuvAB complex. RuvB forms 2 homohexamers on either side of HJ DNA bound by 1 or 2 RuvA tetramers; 4 subunits per hexamer contact DNA at a time. Coordinated motions by a converter formed by DNA-disengaged RuvB subunits stimulates ATP hydrolysis and nucleotide exchange. Immobilization of the converter enables RuvB to convert the ATP-contained energy into a lever motion, pulling 2 nucleotides of DNA out of the RuvA tetramer per ATP hydrolyzed, thus driving DNA branch migration. The RuvB motors rotate together with the DNA substrate, which together with the progressing nucleotide cycle form the mechanistic basis for DNA recombination by continuous HJ branch migration. Branch migration allows RuvC to scan DNA until it finds its consensus sequence, where it cleaves and resolves cruciform DNA. The protein is Holliday junction branch migration complex subunit RuvB of Alkaliphilus metalliredigens (strain QYMF).